A 199-amino-acid polypeptide reads, in one-letter code: Protein extra-macrochaetae (199 aa).

The bHLH domain occupies 23–75 (RIQRHPTHRGDGENAEMKMYLSKLKDLVPFMPKNRKLTKLEIIQHVIDYICDL). Phosphoserine is present on Ser-106. The segment at 127–199 (RLNAEQPAKV…QNAEKDSRQS (73 aa)) is disordered. Residues 161 to 182 (QQHQQQQQLQLQQQQLQSQQQL) are compositionally biased toward low complexity.

Heterodimer with other HLH proteins.

Its subcellular location is the nucleus. Functionally, participates in sensory organ patterning by antagonizing the neurogenic activity of the Achaete-scute complex (AS-C). It lacks a basic DNA-binding domain but is able to form heterodimers with other HLH proteins, thereby inhibiting DNA binding. May sequester proneural proteins in complexes inefficient for DNA interaction. EMC also affects vein differentiation. Inhibits the activity of AS-C proteins by forming an non-DNA binding heterodimer. This is Protein extra-macrochaetae (emc) from Drosophila melanogaster (Fruit fly).